The chain runs to 78 residues: Defensin-like protein 171 (78 aa).

Residues 1 to 23 (MAKTASSLVLPIIFLVMFALVEQ) form the signal peptide. 4 disulfides stabilise this stretch: Cys-27-Cys-71, Cys-34-Cys-56, Cys-40-Cys-65, and Cys-44-Cys-67.

This sequence belongs to the DEFL family.

It localises to the secreted. The polypeptide is Defensin-like protein 171 (LCR61) (Arabidopsis thaliana (Mouse-ear cress)).